Here is a 443-residue protein sequence, read N- to C-terminus: Putative F-box/FBD/LRR-repeat protein At3g49030 (443 aa).

In terms of domain architecture, F-box spans 20 to 68; it reads EDRISELPEDLLLQILSDIPTENVIATSVLSKRWRSLWKMVPNLTFDFT. 6 LRR repeats span residues 74–100, 152–179, 180–205, 218–252, 272–297, and 320–345; these read HQTF…QLNF, ILEI…RLYE, VHFK…SVHR, VPSL…NIVG, ISDV…SLES, and KERE…KLTG. The region spanning 357-408 is the FBD domain; the sequence is NWNPPKCVPECLLFHLEKFLWTGYEWQRGDEKEVATYILENARLLKKATFST.

This Arabidopsis thaliana (Mouse-ear cress) protein is Putative F-box/FBD/LRR-repeat protein At3g49030.